The primary structure comprises 513 residues: RNA-binding protein FUS (513 aa).

The segment covering 1–14 (MASNDYTQQATQSY) has biased composition (polar residues). A disordered region spans residues 1–273 (MASNDYTQQA…SEQDNSDNNT (273 aa)). Composition is skewed to low complexity over residues 20–36 (QPGQ…YGQQ), 43–63 (QSTD…GQTQ), and 84–124 (SSQS…SGYG). Residues 125–139 (QPQGGGYGQQSGYGG) show a composition bias toward gly residues. A compositionally biased stretch (low complexity) spans 140–164 (QQQSYGQQQSYNPPQGYGQQSQYNS). Gly residues-rich tracts occupy residues 165–176 (SGGGGGGGGGSY) and 185–219 (SGGG…GGGY). Asymmetric dimethylarginine; alternate occurs at positions 211 and 213. An omega-N-methylarginine; alternate mark is found at Arg211 and Arg213. Residues Arg229, Arg231, Arg235, Arg238, and Arg246 each carry the asymmetric dimethylarginine modification. Over residues 231-246 (RGGGRGGRGGMGGSDR) the composition is skewed to gly residues. Position 264 is a phosphoserine (Ser264). One can recognise an RRM domain in the interval 272–358 (NTIFVQGLGE…NPIKVSFATR (87 aa)). A Phosphothreonine modification is found at Thr273. Residue Lys321 forms a Glycyl lysine isopeptide (Lys-Gly) (interchain with G-Cter in SUMO2) linkage. Position 327 is a phosphoserine (Ser327). Disordered regions lie at residues 362-411 (FNRG…QRAG) and 431-513 (CNQC…ERPY). Asymmetric dimethylarginine is present on residues Arg364, Arg370, Arg373, Arg375, and Arg381. A compositionally biased stretch (gly residues) spans 364–408 (RGGGNGRGGRGRGGPMGRGGYGGGGSGGGGRGGFPSGGGGGGGQQ). Position 394 is an asymmetric dimethylarginine; alternate (Arg394). Arg394 bears the Omega-N-methylarginine; alternate mark. The segment at 409–440 (RAGDWKCPNPTCENMNFSWRNECNQCKAPKPD) adopts a RanBP2-type zinc-finger fold. Residues 441–455 (GPGGGPGGSHMGGNY) are compositionally biased toward gly residues. Residues 456–480 (GDDRRGGRGGYDRGGYRGRGGDRGG) are compositionally biased toward basic and acidic residues. Arg460, Arg463, Arg468, Arg472, Arg474, Arg478, Arg482, and Arg485 each carry asymmetric dimethylarginine. Over residues 481–495 (FRGGRGGGDRGGFGP) the composition is skewed to gly residues. At Arg490 the chain carries Asymmetric dimethylarginine; alternate. An Omega-N-methylarginine; alternate modification is found at Arg490. Residues 498–513 (MDSRGEHRQDRRERPY) show a composition bias toward basic and acidic residues.

It belongs to the RRM TET family. As to quaternary structure, self-oligomerizes (via N-terminal region). Oligomerization is essential for chromatin binding. Component of nuclear riboprotein complexes. Interacts with ILF3, TDRD3 and SF1. Interacts through its C-terminus with SFRS13A. Interacts with OTUB1 and SARNP. Interacts with LRSAM1. Interacts with SAFB1 in a DNA-dependent manner; this interaction tethers FUS to chromatin. Interacts with MATR3. Interacts with SNRNP70 and POLR2A; these interactions couple RNA transcription and splicing. Interacts (through its RNA-binding domain) with RALY (through its RNA-binding domain); both are components of the same RNPs. Phosphorylated in its N-terminal serine residues upon induced DNA damage. ATM and DNA-PK are able to phosphorylate FUS N-terminal region.

The protein localises to the nucleus. DNA/RNA-binding protein that plays a role in various cellular processes such as transcription regulation, RNA splicing, RNA transport, DNA repair and damage response. Binds to ssRNA containing the consensus sequence 5'-AGGUAA-3'. Binds to nascent pre-mRNAs and acts as a molecular mediator between RNA polymerase II and U1 small nuclear ribonucleoprotein thereby coupling transcription and splicing. Also binds its own pre-mRNA and autoregulates its expression; this autoregulation mechanism is mediated by non-sense-mediated decay. Plays a role in DNA repair mechanisms by promoting D-loop formation and homologous recombination during DNA double-strand break repair. In neuronal cells, plays crucial roles in dendritic spine formation and stability, RNA transport, mRNA stability and synaptic homeostasis. This chain is RNA-binding protein FUS (FUS), found in Bos taurus (Bovine).